We begin with the raw amino-acid sequence, 189 residues long: Large ribosomal subunit protein uL6 (189 aa).

This sequence belongs to the universal ribosomal protein uL6 family. Part of the 50S ribosomal subunit.

Functionally, this protein binds to the 23S rRNA, and is important in its secondary structure. It is located near the subunit interface in the base of the L7/L12 stalk, and near the tRNA binding site of the peptidyltransferase center. This Phocaeicola vulgatus (strain ATCC 8482 / DSM 1447 / JCM 5826 / CCUG 4940 / NBRC 14291 / NCTC 11154) (Bacteroides vulgatus) protein is Large ribosomal subunit protein uL6.